A 585-amino-acid chain; its full sequence is Probable monoterpene synthase MTS1, chloroplastic (585 aa).

The tract at residues 1-29 (MSLSGVPLSAGLAPSPSNKPTNGKGQNIV) is disordered. Residues 1 to 31 (MSLSGVPLSAGLAPSPSNKPTNGKGQNIVRR) constitute a chloroplast transit peptide. A compositionally biased stretch (polar residues) spans 15-25 (SPSNKPTNGKG). The (2E)-geranyl diphosphate site is built by arginine 298, aspartate 335, aspartate 339, arginine 476, and aspartate 479. Aspartate 335 and aspartate 339 together coordinate Mg(2+). The DDXXD motif signature appears at 335–339 (DDIYD). Residues aspartate 479, threonine 483, and glutamate 487 each coordinate Mg(2+).

It belongs to the terpene synthase family. Tpsb subfamily. Mg(2+) is required as a cofactor. Mn(2+) serves as cofactor. In terms of tissue distribution, expressed in trichomes. Detected in flowers, but not in leaves.

The protein localises to the plastid. It localises to the chloroplast. The sequence is that of Probable monoterpene synthase MTS1, chloroplastic from Humulus lupulus (European hop).